Consider the following 154-residue polypeptide: Ubiquitin-conjugating enzyme E2 L3 (154 aa).

The region spanning 2–149 is the UBC core domain; the sequence is AASRRLMKEL…AEEFTKKYGE (148 aa). The Glycyl thioester intermediate role is filled by Cys-86. The residue at position 131 (Lys-131) is an N6-acetyllysine.

Belongs to the ubiquitin-conjugating enzyme family. Interacts with PRKN; involved in ubiquitination and degradation of misfolded proteins. Interacts with UBE3A. Interacts with CCNB1IP1, CBL, ZAP70, RNF19A, RNF19B and RNF144B. Interacts with ARIH1. Interacts with ARIH2 (via RING-type 1). Interacts with NCOA1; they functionally interact to regulate progesterone receptor transcriptional activity. Interacts with NDFIP1 (via N-terminus); the interaction mediates recruitment of UBE2L3 to ITCH and causes MAP3K7 ubiquitination. In terms of processing, ubiquitinated. The alteration of UBE2L3 protein levels during the S-phase of the cell cycle is due to ubiquitin-dependent proteasomal degradation. Autoubiquitinated in vitro.

It localises to the nucleus. Its subcellular location is the cytoplasm. The catalysed reaction is S-ubiquitinyl-[E1 ubiquitin-activating enzyme]-L-cysteine + [E2 ubiquitin-conjugating enzyme]-L-cysteine = [E1 ubiquitin-activating enzyme]-L-cysteine + S-ubiquitinyl-[E2 ubiquitin-conjugating enzyme]-L-cysteine.. It functions in the pathway protein modification; protein ubiquitination. In terms of biological role, ubiquitin-conjugating enzyme E2 that specifically acts with HECT-type and RBR family E3 ubiquitin-protein ligases. Does not function with most RING-containing E3 ubiquitin-protein ligases because it lacks intrinsic E3-independent reactivity with lysine: in contrast, it has activity with the RBR family E3 enzymes, such as PRKN, RNF31 and ARIH1, that function like RING-HECT hybrids. Accepts ubiquitin from the E1 complex and catalyzes its covalent attachment to other proteins. Mediates ubiquitination by the CUL9-RBX1 complex. In vitro catalyzes 'Lys-11'-linked polyubiquitination. Involved in the selective degradation of short-lived and abnormal proteins. Down-regulated during the S-phase it is involved in progression through the cell cycle. Regulates nuclear hormone receptors transcriptional activity. May play a role in myelopoiesis. In Pongo abelii (Sumatran orangutan), this protein is Ubiquitin-conjugating enzyme E2 L3 (UBE2L3).